The primary structure comprises 475 residues: MSPQTETKASSGFKAGVKDYRLTYYTPDYKVSDTDILAAFRMTPQPGVPPEEAGAAVAAESSTGTWTTVWTDGLTSLDRYKGRCYGIEPVAGEENQYIAYVAYPLDLFEEGSVTNMFTSIVGNVFGFKALRALRLEDLRIPPAYSKTFMGPPHGIQVERDKLNKYGRPLLGCTIKPKLGLSAKNYGRAVYECLRGGLDFTKDDENVNSQPFMRWRDRFLFVAEALFKSQAETGEIKGHYLNATAGTCEEMMKRAVFARELGAPIVMHDYLTGGFTANTSLAFYCRDNGLLLHIHRAMHAVIDRQRNHGMHFRVLAKALRMSGGDHVHAGTVVGKLEGERDVTLGFVDLLRDDYIEKDRSRGVYFTQDWVSMPGVLPVASGGIHVWHMPALTEIFGDDSVLQFGGGTLGHPWGNAPGAVANRVALEACVQARNEGRDLAREGNDIIREASKWSPELAAACEVWKEIKFVFDTIDVL.

A propeptide spanning residues 1–2 (MS) is cleaved from the precursor. Pro3 is subject to N-acetylproline. At Lys14 the chain carries N6,N6,N6-trimethyllysine. Positions 123 and 173 each coordinate substrate. The active-site Proton acceptor is Lys175. A substrate-binding site is contributed by Lys177. Mg(2+)-binding residues include Lys201, Asp203, and Glu204. Lys201 carries the post-translational modification N6-carboxylysine. His294 serves as the catalytic Proton acceptor. Residues Arg295, His327, and Ser379 each contribute to the substrate site.

This sequence belongs to the RuBisCO large chain family. Type I subfamily. Heterohexadecamer of 8 large chains and 8 small chains; disulfide-linked. The disulfide link is formed within the large subunit homodimers. Requires Mg(2+) as cofactor. The disulfide bond which can form in the large chain dimeric partners within the hexadecamer appears to be associated with oxidative stress and protein turnover.

It localises to the plastid. The protein resides in the chloroplast. The catalysed reaction is 2 (2R)-3-phosphoglycerate + 2 H(+) = D-ribulose 1,5-bisphosphate + CO2 + H2O. It carries out the reaction D-ribulose 1,5-bisphosphate + O2 = 2-phosphoglycolate + (2R)-3-phosphoglycerate + 2 H(+). In terms of biological role, ruBisCO catalyzes two reactions: the carboxylation of D-ribulose 1,5-bisphosphate, the primary event in carbon dioxide fixation, as well as the oxidative fragmentation of the pentose substrate in the photorespiration process. Both reactions occur simultaneously and in competition at the same active site. The polypeptide is Ribulose bisphosphate carboxylase large chain (Psilotum nudum (Whisk fern)).